The primary structure comprises 807 residues: PGC-1 and ERR-induced regulator in muscle protein 1 (807 aa).

3 disordered regions span residues 29 to 80 (QADL…EDVA), 121 to 391 (CPGQ…TPAS), and 517 to 548 (PSHE…AGSR). 2 stretches are compositionally biased toward low complexity: residues 40 to 52 (SSDI…SGSS) and 145 to 160 (PAPS…PESP). Over residues 162 to 171 (HSDNPQSSPD) the composition is skewed to polar residues. Positions 180–194 (PGRKKRRAVGAKGTK) are enriched in basic residues. Composition is skewed to polar residues over residues 195-211 (HSGS…SPQL), 311-346 (KPQS…STPA), and 363-391 (ALST…TPAS). A Phosphoserine modification is found at Ser198. Position 534 is a phosphothreonine (Thr534). Arg548 carries the post-translational modification Omega-N-methylarginine.

As to expression, highly expressed in skeletal muscles and heart with lower levels in brown adipose tissue (at protein level). Muscle-specific expression is increased by endurance exercise.

The protein resides in the cytoplasm. It localises to the nucleus. Its function is as follows. Regulates the expression of selective PPARGC1A/B and ESRRA/B/G target genes with roles in glucose and lipid metabolism, energy transfer, contractile function, muscle mitochondrial biogenesis and oxidative capacity. Required for the efficient induction of MT-CO2, MT-CO3, COX4I1, TFB1M, TFB2M, POLRMT and SIRT3 by PPARGC1A. Positively regulates the PPARGC1A/ESRRG-induced expression of CKMT2, TNNI3 and SLC2A4 and negatively regulates the PPARGC1A/ESRRG-induced expression of PDK4. This is PGC-1 and ERR-induced regulator in muscle protein 1 (Perm1) from Mus musculus (Mouse).